The following is a 633-amino-acid chain: MQNDQQRFSLQNRTVLAHPYKRLGGAFTVKSPSVPNFHDKMHSDHSSSDSALVNGSFRANDHRSVEPSCLGQASPSEHDGNLSVIDLYGDEVESQRAEGEDDDDNNGDNGNEDLEEVHSDDLDLVPDDDNRQRVELEGAASATSANSNGINNTHFDRYGFKKQNNYISEAEYDKWWVEYSQYCVRRKHKWQLLLEKSGLPVTDDSPSRFPSKSERLKRYVRKGIPAEWRGNAWWHFARGQEKLNKNKGVYSQLLRKMKQIKKQNPNEKQVQDLDIIERDLNRTFPDNIHFQSSLHNKEGPPIIKSLRRVLVAFSLYNPKIGYCQSMNFLAGLLLLFLDEERAFWMLVIITSRYLPGVHNINLEGVNIDQGVLMLCVKEYIPEVWSYIKPSIDHHQKNNKTFSPSNKKVLFNMQKNEFLYRLPPITLCTASWFMSCFVGVVPIETTLRIWDCLFYEESHFLFKVSLAVLKLSEHDLSKIKPRNNSLNYSWGSNLNQRGGSMGQEDSDMEIFQVIQTFPKTLLNPNEIFEKIIFKRRFNLNRLDQDEIDRCRKFVAAQRLKFKTYGELLGNSTSEADLPINDNTDNKGIHITSDAVNEALSSEVYGFKKSLAGVHWNNSIKEKVKQMRKKKDKGD.

A disordered region spans residues 26–127 (AFTVKSPSVP…HSDDLDLVPD (102 aa)). Over residues 37 to 47 (FHDKMHSDHSS) the composition is skewed to basic and acidic residues. Acidic residues predominate over residues 99–115 (GEDDDDNNGDNGNEDLE). Ser147 is modified (phosphoserine). Residues 223 to 456 (GIPAEWRGNA…RIWDCLFYEE (234 aa)) form the Rab-GAP TBC domain. A Phosphoserine modification is found at Ser484.

It localises to the cytoplasm. The protein resides in the bud. It is found in the bud neck. In terms of biological role, regulates exocytosis by functioning as a GAP for SEC4. Stimulates specifically the GTPase activity of YPT6. Also required for efficient polarization of the actin patches. This is GTPase-activating protein GYP3 (MSB3) from Saccharomyces cerevisiae (strain ATCC 204508 / S288c) (Baker's yeast).